Here is a 338-residue protein sequence, read N- to C-terminus: tRNA-cytidine(32) 2-sulfurtransferase (338 aa).

The short motif at 86–91 (SGGKDS) is the PP-loop motif element. [4Fe-4S] cluster contacts are provided by Cys161, Cys164, and Cys252.

It belongs to the TtcA family. As to quaternary structure, homodimer. The cofactor is Mg(2+). It depends on [4Fe-4S] cluster as a cofactor.

The protein resides in the cytoplasm. The catalysed reaction is cytidine(32) in tRNA + S-sulfanyl-L-cysteinyl-[cysteine desulfurase] + AH2 + ATP = 2-thiocytidine(32) in tRNA + L-cysteinyl-[cysteine desulfurase] + A + AMP + diphosphate + H(+). It participates in tRNA modification. Functionally, catalyzes the ATP-dependent 2-thiolation of cytidine in position 32 of tRNA, to form 2-thiocytidine (s(2)C32). The sulfur atoms are provided by the cysteine/cysteine desulfurase (IscS) system. This chain is tRNA-cytidine(32) 2-sulfurtransferase, found in Albidiferax ferrireducens (strain ATCC BAA-621 / DSM 15236 / T118) (Rhodoferax ferrireducens).